The sequence spans 87 residues: MTILSAITSISRPNKISKSVISSNGGSSLSMGSNSVSCYNACGGGSSYSYSSSYSGSGLDYSYKANYSSSTGYNSSVVIASSTCHCS.

The protein belongs to the hssA/B family.

The chain is HssA/B-like protein 54 (hssl54) from Dictyostelium discoideum (Social amoeba).